The primary structure comprises 782 residues: Coiled-coil alpha-helical rod protein 1 (782 aa).

Basic and acidic residues-rich tracts occupy residues 62–74 (ERDVSSDRQEPGR) and 208–218 (ETRRAGEAKEL). Disordered regions lie at residues 62–82 (ERDVSSDRQEPGRRGRSWGLE) and 177–218 (EQLS…AKEL). Coiled-coil stretches lie at residues 111 to 303 (LRET…SLTH), 344 to 437 (LMVQ…NAVS), and 498 to 691 (VTDV…QQEG).

In terms of tissue distribution, found in all tissues tested, abundantly expressed in heart, liver, skeletal muscle, kidney and pancreas, and to a lesser extent in lung and placenta. Overexpressed in keratinocytes of psoriatic lesions.

It is found in the cytoplasm. The protein resides in the nucleus. Functionally, may be a regulator of keratinocyte proliferation or differentiation. The chain is Coiled-coil alpha-helical rod protein 1 (CCHCR1) from Homo sapiens (Human).